A 446-amino-acid chain; its full sequence is Probable glycine dehydrogenase (decarboxylating) subunit 1 (446 aa).

This sequence belongs to the GcvP family. N-terminal subunit subfamily. The glycine cleavage system is composed of four proteins: P, T, L and H. In this organism, the P 'protein' is a heterodimer of two subunits.

The catalysed reaction is N(6)-[(R)-lipoyl]-L-lysyl-[glycine-cleavage complex H protein] + glycine + H(+) = N(6)-[(R)-S(8)-aminomethyldihydrolipoyl]-L-lysyl-[glycine-cleavage complex H protein] + CO2. The glycine cleavage system catalyzes the degradation of glycine. The P protein binds the alpha-amino group of glycine through its pyridoxal phosphate cofactor; CO(2) is released and the remaining methylamine moiety is then transferred to the lipoamide cofactor of the H protein. The sequence is that of Probable glycine dehydrogenase (decarboxylating) subunit 1 from Desulforamulus reducens (strain ATCC BAA-1160 / DSM 100696 / MI-1) (Desulfotomaculum reducens).